A 161-amino-acid chain; its full sequence is Nucleotide-binding protein RC1_3464 (161 aa).

The protein belongs to the YajQ family.

Functionally, nucleotide-binding protein. The protein is Nucleotide-binding protein RC1_3464 of Rhodospirillum centenum (strain ATCC 51521 / SW).